The sequence spans 344 residues: Fibronectin type 3 and ankyrin repeat domains 1 protein (344 aa).

The Fibronectin type-III domain occupies 11–108 (KPHPPVVGKV…VVSVATTREP (98 aa)). ANK repeat units follow at residues 109–139 (ISSE…MIDV), 143–172 (FGFT…DVNL), 176–205 (SGKD…SWEA), 209–238 (GGCT…EVDV), 243–273 (SGWT…DVNI), and 277–306 (DGKT…DATV).

Interacts with COPS5; regulates the phosphorylation of JUN and the transcriptional activity of AP-1. Interacts with RYBP; may prevent the ubiquitin-mediated proteasomal degradation of FANK1. Post-translationally, polyubiquitinated. Polyubiquitination leads to proteasomal degradation. Mostly restricted to testis (at protein level), including mid to late pachytene spermatocytes (stages VI-X), diplotene spermatocytes (stage XI), meiotically dividing spermatocytes (stage XII) and spermatids in steps 1-14. Highest levels in late pachytene spermatocytes and spermatids in steps 1-9.

The protein resides in the nucleus. Its subcellular location is the cytoplasm. It localises to the cytosol. The protein localises to the cytoskeleton. It is found in the cilium basal body. The protein resides in the cell projection. Its subcellular location is the cilium. Functionally, through the activation of JUN and AP-1-mediated transcription, may regulate apoptosis. In Mus musculus (Mouse), this protein is Fibronectin type 3 and ankyrin repeat domains 1 protein.